A 363-amino-acid chain; its full sequence is Mitochondrial RNA-splicing protein MRS1 (363 aa).

As to quaternary structure, homodimer. Forms a ribonucleoprotein complex composed of maturase bI3 and 2 dimers of MRS1 that assemble around the bI3 RNA.

Its subcellular location is the mitochondrion matrix. Function in mitochondrial RNA splicing in the excision of mitochondrial group I introns aI5 beta from COX1 and bI3 from COB transcripts and thus would be involved in obtaining the correct structure of the intron, to allow the RNA catalyzed reactions to occur. This is Mitochondrial RNA-splicing protein MRS1 (MRS1) from Saccharomyces cerevisiae (strain ATCC 204508 / S288c) (Baker's yeast).